The chain runs to 282 residues: 2-dehydro-3-deoxyphosphooctonate aldolase (282 aa).

It belongs to the KdsA family.

The protein localises to the cytoplasm. The enzyme catalyses D-arabinose 5-phosphate + phosphoenolpyruvate + H2O = 3-deoxy-alpha-D-manno-2-octulosonate-8-phosphate + phosphate. Its pathway is carbohydrate biosynthesis; 3-deoxy-D-manno-octulosonate biosynthesis; 3-deoxy-D-manno-octulosonate from D-ribulose 5-phosphate: step 2/3. It functions in the pathway bacterial outer membrane biogenesis; lipopolysaccharide biosynthesis. The protein is 2-dehydro-3-deoxyphosphooctonate aldolase of Shewanella piezotolerans (strain WP3 / JCM 13877).